We begin with the raw amino-acid sequence, 262 residues long: Cytochrome b mRNA maturase bI2 (262 aa).

It belongs to the LAGLIDADG endonuclease family.

It localises to the mitochondrion. This protein is responsible for splicing and maturation of cytochrome b mRNA. Specifically, it may be responsible for the splicing specificity of the second intron. This Debaryomyces hansenii (strain ATCC 36239 / CBS 767 / BCRC 21394 / JCM 1990 / NBRC 0083 / IGC 2968) (Yeast) protein is Cytochrome b mRNA maturase bI2 (bI2).